We begin with the raw amino-acid sequence, 380 residues long: Probable RAD2-like endonuclease 076L (380 aa).

The segment at 1-101 (MGIKNLTQFL…QKIVSKTDAI (101 aa)) is N-domain. Positions 32, 73, 191, 193, 212, 214, and 281 each coordinate Mg(2+). Positions 156 to 301 (IDRRRKYEFS…EKAYKYISDY (146 aa)) are I-domain.

It belongs to the XPG/RAD2 endonuclease family. Mg(2+) is required as a cofactor.

The protein localises to the host nucleus. Probable endonuclease. The sequence is that of Probable RAD2-like endonuclease 076L from Invertebrate iridescent virus 3 (IIV-3).